Here is a 158-residue protein sequence, read N- to C-terminus: Pyruvoyl-dependent arginine decarboxylase (158 aa).

The residue at position 44 (S44) is a Pyruvic acid (Ser).

It belongs to the PdaD family. It depends on pyruvate as a cofactor.

The catalysed reaction is L-arginine + H(+) = agmatine + CO2. This is Pyruvoyl-dependent arginine decarboxylase from Thermococcus sibiricus (strain DSM 12597 / MM 739).